A 337-amino-acid chain; its full sequence is Cytochrome P450 monooxygenase dpmpJ (337 aa).

The helical transmembrane segment at 4-24 (LILHHPYASLAAGILLYFFCL) threads the bilayer. N-linked (GlcNAc...) asparagine glycosylation occurs at N158.

It belongs to the cytochrome P450 family. Requires heme as cofactor.

It is found in the membrane. Its pathway is secondary metabolite biosynthesis; terpenoid biosynthesis. Functionally, cytochrome P450 monooxygenase; part of the gene cluster that mediates the biosynthesis of diterpenoid pyrones. The first step of the pathway is the synthesis of the alpha-pyrone moiety by the polyketide synthase dpmpA via condensation of one acetyl-CoA starter unit with 3 malonyl-CoA units and 2 methylations. The alpha-pyrone is then combined with geranylgeranyl pyrophosphate (GGPP) formed by the GGPP synthase dpmpD through the action of the prenyltransferase dpmpC to yield a linear alpha-pyrone diterpenoid. Subsequent steps in the diterpenoid pyrone biosynthetic pathway involve the decalin core formation, which is initiated by the epoxidation of the C10-C11 olefin by the FAD-dependent oxidoreductase dpmpE, and is followed by a cyclization cascade catalyzed by the terpene cyclase dpmpB. The short chain dehydrogenase/reductase dpmpG then oxidizes the 8S hydroxy group to a ketone and the short chain dehydrogenase/reductase dpmpH reduces the ketone to the 8R hydroxy group to yield higginsianin B. Higginsianin B is further methylated by the methyltransferase dpmpI to produce the intermediate named FDDP B. The cytochrome P450 monooxygenase dpmpJ then oxidizes the C-26 methyl to primary alcohol, producing the final diterpenoid pyrone with a C-26 primary alcohol on the gamma-pyrone moiety named FDDP C. The chain is Cytochrome P450 monooxygenase dpmpJ from Macrophomina phaseolina (strain MS6) (Charcoal rot fungus).